A 101-amino-acid chain; its full sequence is Venom protein 214 (101 aa).

A signal peptide spans 1–16; that stretch reads MIRYVLVIITCFLVAA.

In terms of processing, contains 3 disulfide bonds. In terms of tissue distribution, expressed by the venom gland.

Its subcellular location is the secreted. The sequence is that of Venom protein 214 from Lychas mucronatus (Chinese swimming scorpion).